A 300-amino-acid polypeptide reads, in one-letter code: Geranylgeranyl pyrophosphate synthase (300 aa).

Position 1 is an N-acetylmethionine (Met-1). Residues Lys-25, Arg-28, and His-57 each coordinate isopentenyl diphosphate. Positions 64 and 68 each coordinate Mg(2+). Arg-73 is a binding site for dimethylallyl diphosphate. Arg-74 is an isopentenyl diphosphate binding site. The dimethylallyl diphosphate site is built by Lys-151, Thr-152, Gln-185, Lys-202, and Lys-212.

Belongs to the FPP/GGPP synthase family. In terms of assembly, homohexamer; trimer of homodimers. Mg(2+) is required as a cofactor.

It localises to the cytoplasm. Its subcellular location is the perinuclear region. The protein resides in the myofibril. It is found in the sarcomere. The protein localises to the z line. It carries out the reaction isopentenyl diphosphate + dimethylallyl diphosphate = (2E)-geranyl diphosphate + diphosphate. The enzyme catalyses isopentenyl diphosphate + (2E)-geranyl diphosphate = (2E,6E)-farnesyl diphosphate + diphosphate. The catalysed reaction is isopentenyl diphosphate + (2E,6E)-farnesyl diphosphate = (2E,6E,10E)-geranylgeranyl diphosphate + diphosphate. It functions in the pathway isoprenoid biosynthesis; farnesyl diphosphate biosynthesis; farnesyl diphosphate from geranyl diphosphate and isopentenyl diphosphate: step 1/1. The protein operates within isoprenoid biosynthesis; geranyl diphosphate biosynthesis; geranyl diphosphate from dimethylallyl diphosphate and isopentenyl diphosphate: step 1/1. Its pathway is isoprenoid biosynthesis; geranylgeranyl diphosphate biosynthesis; geranylgeranyl diphosphate from farnesyl diphosphate and isopentenyl diphosphate: step 1/1. Functionally, catalyzes the trans-addition of the three molecules of isopentenyl diphosphate (IPP) onto dimethylallyl pyrophosphate (DMAPP) to form geranylgeranyl pyrophosphate, an important precursor of carotenoids and geranylated proteins. In Mus musculus (Mouse), this protein is Geranylgeranyl pyrophosphate synthase.